A 268-amino-acid chain; its full sequence is Undecaprenyl-diphosphatase (268 aa).

7 helical membrane passes run 7-27 (IFNAIILGIVEGITEFFPISS), 87-107 (LIYHHIILGNIPIIFIGLCIY), 116-136 (FYSIIYALIFGTILLILTEIS), 146-166 (IETPQILIIGIFQCLALWPGF), 187-207 (VEFSFILSVPIFFGASVLDVI), 210-230 (FYDISINNIPMLFSGFLSAFI), and 247-267 (SLIPFIIYRSILSIIIYLFFM).

The protein belongs to the UppP family.

It localises to the cell membrane. It carries out the reaction di-trans,octa-cis-undecaprenyl diphosphate + H2O = di-trans,octa-cis-undecaprenyl phosphate + phosphate + H(+). Catalyzes the dephosphorylation of undecaprenyl diphosphate (UPP). Confers resistance to bacitracin. This chain is Undecaprenyl-diphosphatase, found in Buchnera aphidicola subsp. Baizongia pistaciae (strain Bp).